Reading from the N-terminus, the 156-residue chain is MNINATLIGQSVAFFIFVLFCMKYVWPPVIAALHERQKKIADGLDAASRAARDLELAQDKVGQQLREAKAQAAEIIEQAKKRGTQIVDEARETARVEADRVKAQAQAEIEQELNGVKDALRAQLGSLAVNGAEKILGATIDQNAHAELVNKLAAEI.

Residues 12–32 (VAFFIFVLFCMKYVWPPVIAA) form a helical membrane-spanning segment.

This sequence belongs to the ATPase B chain family. In terms of assembly, F-type ATPases have 2 components, F(1) - the catalytic core - and F(0) - the membrane proton channel. F(1) has five subunits: alpha(3), beta(3), gamma(1), delta(1), epsilon(1). F(0) has three main subunits: a(1), b(2) and c(10-14). The alpha and beta chains form an alternating ring which encloses part of the gamma chain. F(1) is attached to F(0) by a central stalk formed by the gamma and epsilon chains, while a peripheral stalk is formed by the delta and b chains.

Its subcellular location is the cell inner membrane. Its function is as follows. F(1)F(0) ATP synthase produces ATP from ADP in the presence of a proton or sodium gradient. F-type ATPases consist of two structural domains, F(1) containing the extramembraneous catalytic core and F(0) containing the membrane proton channel, linked together by a central stalk and a peripheral stalk. During catalysis, ATP synthesis in the catalytic domain of F(1) is coupled via a rotary mechanism of the central stalk subunits to proton translocation. In terms of biological role, component of the F(0) channel, it forms part of the peripheral stalk, linking F(1) to F(0). This is ATP synthase subunit b from Pseudomonas syringae pv. tomato (strain ATCC BAA-871 / DC3000).